The chain runs to 146 residues: Hemoglobin subunit delta (146 aa).

The Globin domain maps to 2 to 146 (HLTGDEKSAV…VATALAHKYH (145 aa)). Position 50 is a phosphoserine (serine 50). Residues histidine 63 and histidine 92 each contribute to the heme b site.

It belongs to the globin family. As to quaternary structure, heterotetramer of two delta chains and two alpha chains. Red blood cells.

The polypeptide is Hemoglobin subunit delta (HBD) (Aotus trivirgatus (Three-striped night monkey)).